Here is a 396-residue protein sequence, read N- to C-terminus: MTKTIAINAGSSSLKWQLYLMPEEKVLAKGLIERIGLKDSISTVKFDGRSEQQILDIENHTQAVKILLDDLIRFDIIKAYDEITGVGHRVVAGGEYFKESTVVEGDVLEKVEELSLLAPLHNPANAAGVRAFKELLPDITSVVVFDTSFHTSMPEKAYRYPLPTKYYTENKVRKYGAHGTSHQFVAGEAAKLLGRPLEDLKLITCHIGNGGSITAVKAGKSVDTSMGFTPLGGIMMGTRTGDIDPAIIPYLMQYTEDFNTPEDISRVLNRESGLLGVSANSSDMRDIEAAVAEGNHEASLAYEMYVDRIQKHIGQYLAVLNGADAIVFTAGVGENAESFRRDVISGISWFGCDVDDEKNVFGVTGDISTEAAKIRVLVIPTDEELVIARDVERLKK.

Asn-8 provides a ligand contact to Mg(2+). An ATP-binding site is contributed by Lys-15. Arg-89 provides a ligand contact to substrate. Asp-146 acts as the Proton donor/acceptor in catalysis. ATP contacts are provided by residues 206–210 (HIGNG), 283–285 (DMR), and 331–335 (GVGEN). Glu-383 lines the Mg(2+) pocket.

This sequence belongs to the acetokinase family. Homodimer. The cofactor is Mg(2+). It depends on Mn(2+) as a cofactor.

The protein localises to the cytoplasm. The catalysed reaction is acetate + ATP = acetyl phosphate + ADP. It participates in metabolic intermediate biosynthesis; acetyl-CoA biosynthesis; acetyl-CoA from acetate: step 1/2. Functionally, catalyzes the formation of acetyl phosphate from acetate and ATP. Can also catalyze the reverse reaction. This is Acetate kinase from Streptococcus pneumoniae (strain ATCC 700669 / Spain 23F-1).